Reading from the N-terminus, the 359-residue chain is Histidinol-phosphate aminotransferase (359 aa).

At Lys-217 the chain carries N6-(pyridoxal phosphate)lysine.

The protein belongs to the class-II pyridoxal-phosphate-dependent aminotransferase family. Histidinol-phosphate aminotransferase subfamily. In terms of assembly, homodimer. Requires pyridoxal 5'-phosphate as cofactor.

It carries out the reaction L-histidinol phosphate + 2-oxoglutarate = 3-(imidazol-4-yl)-2-oxopropyl phosphate + L-glutamate. It functions in the pathway amino-acid biosynthesis; L-histidine biosynthesis; L-histidine from 5-phospho-alpha-D-ribose 1-diphosphate: step 7/9. This chain is Histidinol-phosphate aminotransferase, found in Salmonella paratyphi A (strain ATCC 9150 / SARB42).